The sequence spans 453 residues: Probable glycine dehydrogenase (decarboxylating) subunit 1 (453 aa).

Belongs to the GcvP family. N-terminal subunit subfamily. The glycine cleavage system is composed of four proteins: P, T, L and H. In this organism, the P 'protein' is a heterodimer of two subunits.

It carries out the reaction N(6)-[(R)-lipoyl]-L-lysyl-[glycine-cleavage complex H protein] + glycine + H(+) = N(6)-[(R)-S(8)-aminomethyldihydrolipoyl]-L-lysyl-[glycine-cleavage complex H protein] + CO2. Its function is as follows. The glycine cleavage system catalyzes the degradation of glycine. The P protein binds the alpha-amino group of glycine through its pyridoxal phosphate cofactor; CO(2) is released and the remaining methylamine moiety is then transferred to the lipoamide cofactor of the H protein. In Erythrobacter litoralis (strain HTCC2594), this protein is Probable glycine dehydrogenase (decarboxylating) subunit 1.